Here is a 227-residue protein sequence, read N- to C-terminus: Cytochrome c oxidase subunit 2 (227 aa).

Residues 1–14 (MAYPMQLGFQDATS) are Mitochondrial intermembrane-facing. The helical transmembrane segment at 15–45 (PIMEELLHFHDHTLMIVFLISSLVLYIISLM) threads the bilayer. The Mitochondrial matrix portion of the chain corresponds to 46–59 (LTTKLTHTSTMDAQ). Residues 60 to 87 (EVETVWTILPAIILILIALPSLRILYMM) form a helical membrane-spanning segment. The Mitochondrial intermembrane segment spans residues 88 to 227 (DEINNPSLTV…HFEEWSASMS (140 aa)). The Cu cation site is built by H161, C196, E198, C200, H204, and M207. A Mg(2+)-binding site is contributed by E198.

This sequence belongs to the cytochrome c oxidase subunit 2 family. In terms of assembly, component of the cytochrome c oxidase (complex IV, CIV), a multisubunit enzyme composed of 14 subunits. The complex is composed of a catalytic core of 3 subunits MT-CO1, MT-CO2 and MT-CO3, encoded in the mitochondrial DNA, and 11 supernumerary subunits COX4I, COX5A, COX5B, COX6A, COX6B, COX6C, COX7A, COX7B, COX7C, COX8 and NDUFA4, which are encoded in the nuclear genome. The complex exists as a monomer or a dimer and forms supercomplexes (SCs) in the inner mitochondrial membrane with NADH-ubiquinone oxidoreductase (complex I, CI) and ubiquinol-cytochrome c oxidoreductase (cytochrome b-c1 complex, complex III, CIII), resulting in different assemblies (supercomplex SCI(1)III(2)IV(1) and megacomplex MCI(2)III(2)IV(2)). Found in a complex with TMEM177, COA6, COX18, COX20, SCO1 and SCO2. Interacts with TMEM177 in a COX20-dependent manner. Interacts with COX20. Interacts with COX16. The cofactor is Cu cation.

It localises to the mitochondrion inner membrane. It catalyses the reaction 4 Fe(II)-[cytochrome c] + O2 + 8 H(+)(in) = 4 Fe(III)-[cytochrome c] + 2 H2O + 4 H(+)(out). Functionally, component of the cytochrome c oxidase, the last enzyme in the mitochondrial electron transport chain which drives oxidative phosphorylation. The respiratory chain contains 3 multisubunit complexes succinate dehydrogenase (complex II, CII), ubiquinol-cytochrome c oxidoreductase (cytochrome b-c1 complex, complex III, CIII) and cytochrome c oxidase (complex IV, CIV), that cooperate to transfer electrons derived from NADH and succinate to molecular oxygen, creating an electrochemical gradient over the inner membrane that drives transmembrane transport and the ATP synthase. Cytochrome c oxidase is the component of the respiratory chain that catalyzes the reduction of oxygen to water. Electrons originating from reduced cytochrome c in the intermembrane space (IMS) are transferred via the dinuclear copper A center (CU(A)) of subunit 2 and heme A of subunit 1 to the active site in subunit 1, a binuclear center (BNC) formed by heme A3 and copper B (CU(B)). The BNC reduces molecular oxygen to 2 water molecules using 4 electrons from cytochrome c in the IMS and 4 protons from the mitochondrial matrix. This Antilocapra americana (Pronghorn) protein is Cytochrome c oxidase subunit 2 (MT-CO2).